Here is a 92-residue protein sequence, read N- to C-terminus: UPF0358 protein SH1840 (92 aa).

The protein belongs to the UPF0358 family.

The sequence is that of UPF0358 protein SH1840 from Staphylococcus haemolyticus (strain JCSC1435).